Reading from the N-terminus, the 500-residue chain is Cytochrome P450 71B9 (500 aa).

A helical transmembrane segment spans residues 1–21; the sequence is MATIWFLSLLFLCCILLAAFK. Cys440 lines the heme pocket.

This sequence belongs to the cytochrome P450 family. The cofactor is heme.

It is found in the membrane. The sequence is that of Cytochrome P450 71B9 (CYP71B9) from Arabidopsis thaliana (Mouse-ear cress).